Consider the following 403-residue polypeptide: MKSVEEQLALIKRGADELLVEAELVEKLKRGQPLRIKAGFDPTAPDLHLGHTVLINKLRQFQDLGHQIIFLIGDFTGMIGDPSGKSATRPPLTREQVLDYAETYKSQVFKILDPAKTEVAFNSTWMDKLSPADFIRLSSQYTVARMLERDDFDKRYKSNQSIAIHEFLYPLVQGYDSVALKADVELGGTDQKFNLLMGRELQRAYGQEPQCILTMPLLEGLDGVKKMSKSLGNYVGIQEAPGIMYSKLVSIPDSLMWRYFELLSFRSMEEINGLKADCEAGANPRDIKIKLAEELVARFHGEEAAANAHRSAGNRMKEGELPDDLPEISVAAIEDMPISAVLNKAGLVKNAAVARDLLASGGVRIDGEVVDRGFVFKLGATHVCQAGKKAFGRVTLVSEESSK.

The 'HIGH' region motif lies at 42–51; that stretch reads PTAPDLHLGH. Residues 226–230 carry the 'KMSKS' region motif; that stretch reads KMSKS. Lys-229 is an ATP binding site. Positions 336–396 constitute an S4 RNA-binding domain; sequence MPISAVLNKA…GKKAFGRVTL (61 aa).

The protein belongs to the class-I aminoacyl-tRNA synthetase family. TyrS type 2 subfamily. In terms of assembly, homodimer.

It localises to the cytoplasm. The enzyme catalyses tRNA(Tyr) + L-tyrosine + ATP = L-tyrosyl-tRNA(Tyr) + AMP + diphosphate + H(+). In terms of biological role, catalyzes the attachment of tyrosine to tRNA(Tyr) in a two-step reaction: tyrosine is first activated by ATP to form Tyr-AMP and then transferred to the acceptor end of tRNA(Tyr). This Pseudomonas savastanoi pv. phaseolicola (strain 1448A / Race 6) (Pseudomonas syringae pv. phaseolicola (strain 1448A / Race 6)) protein is Tyrosine--tRNA ligase.